The sequence spans 209 residues: Large ribosomal subunit protein uL3 (209 aa).

Belongs to the universal ribosomal protein uL3 family. Part of the 50S ribosomal subunit. Forms a cluster with proteins L14 and L19.

Functionally, one of the primary rRNA binding proteins, it binds directly near the 3'-end of the 23S rRNA, where it nucleates assembly of the 50S subunit. This chain is Large ribosomal subunit protein uL3, found in Clostridium botulinum (strain Okra / Type B1).